A 171-amino-acid chain; its full sequence is Probable chorismate pyruvate-lyase (171 aa).

M36, R78, L116, and E157 together coordinate substrate.

The protein belongs to the UbiC family.

It is found in the cytoplasm. The enzyme catalyses chorismate = 4-hydroxybenzoate + pyruvate. Its pathway is cofactor biosynthesis; ubiquinone biosynthesis. Functionally, removes the pyruvyl group from chorismate, with concomitant aromatization of the ring, to provide 4-hydroxybenzoate (4HB) for the ubiquinone pathway. The chain is Probable chorismate pyruvate-lyase from Bartonella henselae (strain ATCC 49882 / DSM 28221 / CCUG 30454 / Houston 1) (Rochalimaea henselae).